A 62-amino-acid chain; its full sequence is Defensin BmKDfsin6 (62 aa).

The N-terminal stretch at 1–24 is a signal peptide; sequence MKVIAILFLLAFVLCTMEITMVEA. Cystine bridges form between Cys28/Cys49, Cys35/Cys57, and Cys39/Cys59.

It belongs to the invertebrate defensin family. Type 2 subfamily. Highly expressed in non-venom gland (hemolymph) and moderately expressed in venom gland.

The protein resides in the secreted. Its function is as follows. Antibacterial peptide active against Gram-positive bacteria, but not on Gram-negative bacteria. Also has weak blocking activity on Kv1.1/KCNA1, Kv1.2/KCNA2, Kv1.3/KCNA3, KCa3.1/KCNN4/IK, KCa2.3/KCNN3/SK3 and Kv11.1/KCNH2/ERG1 channels (tested at 1 uM). It inhibits potassium channel current by interacting with the pore region. The sequence is that of Defensin BmKDfsin6 from Olivierus martensii (Manchurian scorpion).